A 323-amino-acid chain; its full sequence is Methionyl-tRNA formyltransferase (323 aa).

113–116 (SLLP) is a binding site for (6S)-5,6,7,8-tetrahydrofolate.

The protein belongs to the Fmt family.

The catalysed reaction is L-methionyl-tRNA(fMet) + (6R)-10-formyltetrahydrofolate = N-formyl-L-methionyl-tRNA(fMet) + (6S)-5,6,7,8-tetrahydrofolate + H(+). In terms of biological role, attaches a formyl group to the free amino group of methionyl-tRNA(fMet). The formyl group appears to play a dual role in the initiator identity of N-formylmethionyl-tRNA by promoting its recognition by IF2 and preventing the misappropriation of this tRNA by the elongation apparatus. In Nitrosococcus oceani (strain ATCC 19707 / BCRC 17464 / JCM 30415 / NCIMB 11848 / C-107), this protein is Methionyl-tRNA formyltransferase.